The chain runs to 131 residues: Small ribosomal subunit protein uS8 (131 aa).

Belongs to the universal ribosomal protein uS8 family. As to quaternary structure, part of the 30S ribosomal subunit. Contacts proteins S5 and S12.

Functionally, one of the primary rRNA binding proteins, it binds directly to 16S rRNA central domain where it helps coordinate assembly of the platform of the 30S subunit. In Ralstonia pickettii (strain 12J), this protein is Small ribosomal subunit protein uS8.